Consider the following 404-residue polypeptide: Cysteine desulfurase IscS (404 aa).

Pyridoxal 5'-phosphate contacts are provided by residues 75 to 76, asparagine 155, glutamine 183, and 203 to 205; these read AT and SGH. Lysine 206 is modified (N6-(pyridoxal phosphate)lysine). Threonine 243 lines the pyridoxal 5'-phosphate pocket. The Cysteine persulfide intermediate role is filled by cysteine 328. Cysteine 328 contributes to the [2Fe-2S] cluster binding site.

This sequence belongs to the class-V pyridoxal-phosphate-dependent aminotransferase family. NifS/IscS subfamily. Homodimer. Forms a heterotetramer with IscU, interacts with other sulfur acceptors. The cofactor is pyridoxal 5'-phosphate.

It localises to the cytoplasm. It catalyses the reaction (sulfur carrier)-H + L-cysteine = (sulfur carrier)-SH + L-alanine. Its pathway is cofactor biosynthesis; iron-sulfur cluster biosynthesis. In terms of biological role, master enzyme that delivers sulfur to a number of partners involved in Fe-S cluster assembly, tRNA modification or cofactor biosynthesis. Catalyzes the removal of elemental sulfur atoms from cysteine to produce alanine. Functions as a sulfur delivery protein for Fe-S cluster synthesis onto IscU, an Fe-S scaffold assembly protein, as well as other S acceptor proteins. This is Cysteine desulfurase IscS from Klebsiella pneumoniae subsp. pneumoniae (strain ATCC 700721 / MGH 78578).